Reading from the N-terminus, the 552-residue chain is Glutamate--tRNA ligase (552 aa).

Positions 41–51 (PSPTGFQHIGG) match the 'HIGH' region motif. The 'KMSKS' region motif lies at 293–297 (KLSKR). K296 lines the ATP pocket.

It belongs to the class-I aminoacyl-tRNA synthetase family. Glutamate--tRNA ligase type 1 subfamily. In terms of assembly, monomer.

It localises to the cytoplasm. The enzyme catalyses tRNA(Glu) + L-glutamate + ATP = L-glutamyl-tRNA(Glu) + AMP + diphosphate. In terms of biological role, catalyzes the attachment of glutamate to tRNA(Glu) in a two-step reaction: glutamate is first activated by ATP to form Glu-AMP and then transferred to the acceptor end of tRNA(Glu). In Clostridium perfringens (strain SM101 / Type A), this protein is Glutamate--tRNA ligase.